We begin with the raw amino-acid sequence, 235 residues long: Ribonuclease 3 (235 aa).

Residues 7–131 (LSALEARIGH…IIGAVFLDGG (125 aa)) form the RNase III domain. Glutamate 45 contacts Mg(2+). Aspartate 49 is an active-site residue. Residues aspartate 117 and glutamate 120 each contribute to the Mg(2+) site. Residue glutamate 120 is part of the active site. The DRBM domain maps to 156-225 (DPKTTLQEWA…AAAFLTREKI (70 aa)).

Belongs to the ribonuclease III family. As to quaternary structure, homodimer. Mg(2+) serves as cofactor.

It localises to the cytoplasm. It carries out the reaction Endonucleolytic cleavage to 5'-phosphomonoester.. Functionally, digests double-stranded RNA. Involved in the processing of primary rRNA transcript to yield the immediate precursors to the large and small rRNAs (23S and 16S). Processes some mRNAs, and tRNAs when they are encoded in the rRNA operon. Processes pre-crRNA and tracrRNA of type II CRISPR loci if present in the organism. The sequence is that of Ribonuclease 3 from Methylocella silvestris (strain DSM 15510 / CIP 108128 / LMG 27833 / NCIMB 13906 / BL2).